The primary structure comprises 111 residues: Toxin 3FTx-Tel4 (111 aa).

A signal peptide spans 1 to 19; the sequence is MKTLLLALVVVAFMCLGSA. Positions 20 to 34 are excised as a propeptide; that stretch reads DQLGLGSQRIDWEQG. The residue at position 35 (Gln-35) is a Pyrrolidone carboxylic acid. Intrachain disulfides connect Cys-44-Cys-68, Cys-47-Cys-55, Cys-61-Cys-87, Cys-91-Cys-102, and Cys-103-Cys-108.

Belongs to the three-finger toxin family. Ancestral subfamily. Boigatoxin sub-subfamily. Expressed by the venom gland.

It localises to the secreted. Functionally, potent postsynaptic neurotoxin. Displays readily reversible competitive antagonism at the nicotinic acetylcholine receptor (nAChR). The protein is Toxin 3FTx-Tel4 of Telescopus dhara (Egyptian catsnake).